The primary structure comprises 104 residues: MSTPNTHLLCLIATDLRKHFFAVLVGMLIVCSAIYNVYTTHKTRGLVTQIERLAQDKDDLMMEWRNLLIEEHTLDEHSRIRRIALKKLSMSQATKKNSVLVELR.

Topologically, residues 1–19 are cytoplasmic; the sequence is MSTPNTHLLCLIATDLRKH. The helical transmembrane segment at 20–39 threads the bilayer; that stretch reads FFAVLVGMLIVCSAIYNVYT. Residues 40-104 lie on the Periplasmic side of the membrane; the sequence is THKTRGLVTQ…KKNSVLVELR (65 aa).

It belongs to the FtsL family. Part of a complex composed of FtsB, FtsL and FtsQ.

The protein resides in the cell inner membrane. In terms of biological role, essential cell division protein. May link together the upstream cell division proteins, which are predominantly cytoplasmic, with the downstream cell division proteins, which are predominantly periplasmic. The protein is Cell division protein FtsL of Psychromonas ingrahamii (strain DSM 17664 / CCUG 51855 / 37).